The primary structure comprises 1173 residues: MTRRCMPARPGFPSSPAPGSSPPRCHLRPGSTAHAAAGKRTESPGDRKQSIIDFFKPASKQDRHMLDSPQKSNIKYGGSRLSITGTEQFERKLSSPKESKPKRVPPEKSPIIEAFMKGVKEHHEDHGIHESRRPCLSLASKYLAKGTNIYVPSSYHLPKEMKSLKKKHRSPERRKSLFIHENNEKNDRDRGKTNADSKKQTTVAEADIFNNSSRSLSSRSSLSRHHPEESPLGAKFQLSLASYCRERELKRLRKEQMEQRINSENSFSEASSLSLKSSIERKYKPRQEQRKQNDIIPGKNNLSNVENGHLSRKRSSSDSWEPTSAGSKQNKFPEKRKRNSVDSDLKSTRESMIPKARESFLEKRPDGPHQKEKFIKHIALKTPGDVLRLEDISKEPSDETDGSSAGLAPSNSGNSGHHSTRNSDQIQVAGTKETKMQKPHLPLSQEKSAIKKASNLQKNKTASSTTKEKETKLPLLSRVPSAGSSLVPLNAKNCALPVSKKDKERSSSKECSGHSTESTKHKEHKAKTNKADSNVSSGKISGGPLRSEYGTPTKSPPAALEVVPCIPSPAAPSDKAPSEGESSGNSNAGSSALKRKLRGDFDSDEESLGYNLDSDEEEETLKSLEEIMALNFNQTPAATGKPPALSKGLRSQSSDYTGHVHPGTYTNTLERLVKEMEDTQRLDELQKQLQEDIRQGRGIKSPIRIGEEDSTDDEDGLLEEHKEFLKKFSVTIDAIPDHHPGEEIFNFLNSGKIFNQYTLDLRDSGFIGQSAVEKLILKSGKTDQIFLTTQGFLTSAYHYVQCPVPVLKWLFRMMSVHTDCIVSVQILSTLMEITIRNDTFSDSPVWPWIPSLSDVAAVFFNMGIDFRSLFPLENLQPDFNEDYLVSETQTTSRGKESEDSSYKPIFSTLPETNILNVVKFLGLCTSIHPEGYQDREIMLLILMLFKMSLEKQLKQIPLVDFQSLLINLMKNIRDWNTKVPELCLGINELSSHPHNLLWLVQLVPNWTSRGRQLRQCLSLVIISKLLDEKHEDVPNASNLQVSVLHRYLVQMKPSDLLKKMVLKKKAEQPDGIIDDSLHLELEKQAYYLTYILLHLVGEVSCSHSFSSGQRKHFVLLCGALEKHVKCDIREDARLFYRTKVKDLVARIHGKWQEIIQNCRPTQGQLHDFWVPDS.

The segment at 1-109 (MTRRCMPARP…KPKRVPPEKS (109 aa)) is disordered. Basic and acidic residues-rich tracts occupy residues 39–50 (KRTESPGDRKQS) and 88–106 (QFERKLSSPKESKPKRVPP). The APIM motif motif lies at 137-149 (SLASKYLAKGTNI). 5 disordered regions span residues 161-230 (MKSL…PEES), 256-275 (QMEQRINSENSFSEASSLSL), 280-373 (ERKY…QKEK), 394-620 (KEPS…EEET), and 635-663 (TPAATGKPPALSKGLRSQSSDYTGHVHPG). Residues 181-199 (ENNEKNDRDRGKTNADSKK) are compositionally biased toward basic and acidic residues. 2 stretches are compositionally biased toward low complexity: residues 212–221 (SSRSLSSRSS) and 262–275 (NSENSFSEASSLSL). Over residues 280-293 (ERKYKPRQEQRKQN) the composition is skewed to basic and acidic residues. Over residues 317-330 (SDSWEPTSAGSKQN) the composition is skewed to polar residues. Basic and acidic residues-rich tracts occupy residues 339–349 (NSVDSDLKSTR) and 355–373 (KARESFLEKRPDGPHQKEK). Positions 409 to 428 (PSNSGNSGHHSTRNSDQIQV) are enriched in polar residues. The residue at position 481 (serine 481) is a Phosphoserine. Residues 499–520 (SKKDKERSSSKECSGHSTESTK) show a composition bias toward basic and acidic residues. Residues 571-592 (APSDKAPSEGESSGNSNAGSSA) show a composition bias toward low complexity. Residues 602-619 (DSDEESLGYNLDSDEEEE) show a composition bias toward acidic residues. 3 positions are modified to phosphoserine: serine 603, serine 607, and serine 614. The interaction with SIMC1 stretch occupies residues 635-1173 (TPAATGKPPA…QLHDFWVPDS (539 aa)). The NSE6-like domain stretch occupies residues 664–1166 (TYTNTLERLV…NCRPTQGQLH (503 aa)). Positions 702-1173 (PIRIGEEDST…QLHDFWVPDS (472 aa)) are required for interaction with SLF1 and RAD18.

This sequence belongs to the FAM178 family. As to quaternary structure, forms a heterodimer with SIMC1. Interacts with SLF1 (via N-terminus); this interaction links RAD18 to the SMC5-SMC6 complex. Interacts with RAD18; this interaction is increased in a SLF1-dependent manner. Interacts with SMC5 and SMC6. Widely expressed. Expressed at higher level in skeletal muscle and at slightly lower level in brain, liver and heart, than in lung, kidney, spleen and thymus.

The protein resides in the nucleus. The protein localises to the PML body. Functionally, plays a role in the DNA damage response (DDR) pathway by regulating postreplication repair of UV-damaged DNA and genomic stability maintenance. The SLF1-SLF2 complex acts to link RAD18 with the SMC5-SMC6 complex at replication-coupled interstrand cross-links (ICL) and DNA double-strand breaks (DSBs) sites on chromatin during DNA repair in response to stalled replication forks. Promotes the recruitment of the SMC5-SMC6 complex to DNA lesions. Plays a role in SMC5-SMC6 complex recruitment for viral restriction. Forms a complex with SIMC1 and this complex is required to recruit SMC5-SMC6 complex to PML nuclear bodies and sites of viral replication. This Homo sapiens (Human) protein is SMC5-SMC6 complex localization factor protein 2.